The following is a 64-amino-acid chain: Large ribosomal subunit protein uL29 (64 aa).

This sequence belongs to the universal ribosomal protein uL29 family.

The protein is Large ribosomal subunit protein uL29 of Levilactobacillus brevis (strain ATCC 367 / BCRC 12310 / CIP 105137 / JCM 1170 / LMG 11437 / NCIMB 947 / NCTC 947) (Lactobacillus brevis).